Reading from the N-terminus, the 401-residue chain is Enoyl-[acyl-carrier-protein] reductase [NADH] (401 aa).

NAD(+) contacts are provided by residues 48–53 (GASSGY), 74–75 (FE), 111–112 (DA), and 140–141 (LA). Residue Tyr226 coordinates substrate. Catalysis depends on Tyr236, which acts as the Proton donor. NAD(+) contacts are provided by residues Lys245 and 274–276 (VVT).

Belongs to the TER reductase family. As to quaternary structure, monomer.

The catalysed reaction is a 2,3-saturated acyl-[ACP] + NAD(+) = a (2E)-enoyl-[ACP] + NADH + H(+). The protein operates within lipid metabolism; fatty acid biosynthesis. In terms of biological role, involved in the final reduction of the elongation cycle of fatty acid synthesis (FAS II). Catalyzes the reduction of a carbon-carbon double bond in an enoyl moiety that is covalently linked to an acyl carrier protein (ACP). The chain is Enoyl-[acyl-carrier-protein] reductase [NADH] from Xylella fastidiosa (strain Temecula1 / ATCC 700964).